A 246-amino-acid chain; its full sequence is 1-(5-phosphoribosyl)-5-[(5-phosphoribosylamino)methylideneamino] imidazole-4-carboxamide isomerase (246 aa).

Catalysis depends on Asp8, which acts as the Proton acceptor. The active-site Proton donor is Asp131.

This sequence belongs to the HisA/HisF family.

It is found in the cytoplasm. It catalyses the reaction 1-(5-phospho-beta-D-ribosyl)-5-[(5-phospho-beta-D-ribosylamino)methylideneamino]imidazole-4-carboxamide = 5-[(5-phospho-1-deoxy-D-ribulos-1-ylimino)methylamino]-1-(5-phospho-beta-D-ribosyl)imidazole-4-carboxamide. It functions in the pathway amino-acid biosynthesis; L-histidine biosynthesis; L-histidine from 5-phospho-alpha-D-ribose 1-diphosphate: step 4/9. This chain is 1-(5-phosphoribosyl)-5-[(5-phosphoribosylamino)methylideneamino] imidazole-4-carboxamide isomerase, found in Albidiferax ferrireducens (strain ATCC BAA-621 / DSM 15236 / T118) (Rhodoferax ferrireducens).